Consider the following 101-residue polypeptide: Small ribosomal subunit protein bS6 (101 aa).

It belongs to the bacterial ribosomal protein bS6 family.

Functionally, binds together with bS18 to 16S ribosomal RNA. This is Small ribosomal subunit protein bS6 from Pseudarthrobacter chlorophenolicus (strain ATCC 700700 / DSM 12829 / CIP 107037 / JCM 12360 / KCTC 9906 / NCIMB 13794 / A6) (Arthrobacter chlorophenolicus).